Consider the following 265-residue polypeptide: Anamorsin homolog (265 aa).

The segment at 1 to 147 (MDAAKMYGAV…WKIGSSFALK (147 aa)) is N-terminal SAM-like domain. The interval 147–176 (KKVVKSSPKVQIDFDSDLIDENSLLSEEDL) is linker. Residues Cys-186, Cys-195, Cys-198, and Cys-200 each contribute to the [2Fe-2S] cluster site. The interval 186–200 (CEIGPTRKACKNCSC) is fe-S binding site A. [4Fe-4S] cluster-binding residues include Cys-226, Cys-229, Cys-237, and Cys-240. 2 short sequence motifs (cx2C motif) span residues 226-229 (CGSC) and 237-240 (CSTC). Residues 226–240 (CGSCGLGDAFRCSTC) form a fe-S binding site B region.

Belongs to the anamorsin family. In terms of assembly, monomer. Requires [2Fe-2S] cluster as cofactor. The cofactor is [4Fe-4S] cluster.

It is found in the cytoplasm. The protein localises to the mitochondrion intermembrane space. In terms of biological role, component of the cytosolic iron-sulfur (Fe-S) protein assembly (CIA) machinery. Required for the maturation of extramitochondrial Fe-S proteins. Part of an electron transfer chain functioning in an early step of cytosolic Fe-S biogenesis, facilitating the de novo assembly of a [4Fe-4S] cluster on the cytosolic Fe-S scaffold complex. Electrons are transferred from NADPH via a FAD- and FMN-containing diflavin oxidoreductase. Together with the diflavin oxidoreductase, also required for the assembly of the diferric tyrosyl radical cofactor of ribonucleotide reductase (RNR), probably by providing electrons for reduction during radical cofactor maturation in the catalytic small subunit. The chain is Anamorsin homolog from Medicago truncatula (Barrel medic).